A 131-amino-acid chain; its full sequence is Phosphomevalonate dehydratase small subunit (131 aa).

Ser-62 functions as the Proton acceptor in the catalytic mechanism.

Belongs to the AcnX type II small subunit family. Heterodimer composed of a large subunit (PMDh-L) and a small subunit (PMDh-S).

The enzyme catalyses (R)-5-phosphomevalonate = (2E)-3-methyl-5-phosphooxypent-2-enoate + H2O. Its pathway is isoprenoid biosynthesis; isopentenyl diphosphate biosynthesis via mevalonate pathway. Functionally, component of a hydro-lyase that catalyzes the dehydration of mevalonate 5-phosphate (MVA5P) to form trans-anhydromevalonate 5-phosphate (tAHMP). Involved in the archaeal mevalonate (MVA) pathway, which provides fundamental precursors for isoprenoid biosynthesis, such as isopentenyl diphosphate (IPP) and dimethylallyl diphosphate (DMAPP). This chain is Phosphomevalonate dehydratase small subunit, found in Thermococcus gammatolerans (strain DSM 15229 / JCM 11827 / EJ3).